We begin with the raw amino-acid sequence, 198 residues long: Small ribosomal subunit protein eS1 (198 aa).

It belongs to the eukaryotic ribosomal protein eS1 family.

This is Small ribosomal subunit protein eS1 from Methanosphaerula palustris (strain ATCC BAA-1556 / DSM 19958 / E1-9c).